Reading from the N-terminus, the 466-residue chain is Arginine biosynthesis bifunctional protein ArgJ, mitochondrial (466 aa).

Residues threonine 194, lysine 223, threonine 234, glutamate 321, asparagine 461, and threonine 466 each coordinate substrate. Threonine 234 functions as the Nucleophile in the catalytic mechanism.

It belongs to the ArgJ family. Heterodimer of an alpha and a beta chain. Post-translationally, the alpha and beta chains are autoproteolytically processed from a single precursor protein within the mitochondrion.

The protein resides in the mitochondrion matrix. It catalyses the reaction N(2)-acetyl-L-ornithine + L-glutamate = N-acetyl-L-glutamate + L-ornithine. The catalysed reaction is L-glutamate + acetyl-CoA = N-acetyl-L-glutamate + CoA + H(+). It participates in amino-acid biosynthesis; L-arginine biosynthesis; L-ornithine and N-acetyl-L-glutamate from L-glutamate and N(2)-acetyl-L-ornithine (cyclic): step 1/1. The protein operates within amino-acid biosynthesis; L-arginine biosynthesis; N(2)-acetyl-L-ornithine from L-glutamate: step 1/4. Functionally, catalyzes two activities which are involved in the cyclic version of arginine biosynthesis: the synthesis of acetylglutamate from glutamate and acetyl-CoA, and of ornithine by transacetylation between acetylornithine and glutamate. This is Arginine biosynthesis bifunctional protein ArgJ, mitochondrial from Aspergillus fumigatus (strain ATCC MYA-4609 / CBS 101355 / FGSC A1100 / Af293) (Neosartorya fumigata).